Here is a 99-residue protein sequence, read N- to C-terminus: Putative GIY-YIG domain-containing protein 242L (99 aa).

The GIY-YIG domain occupies 5–81 (NGWNIYMVTM…KKQTKKVKLQ (77 aa)).

The protein is Putative GIY-YIG domain-containing protein 242L of Invertebrate iridescent virus 6 (IIV-6).